We begin with the raw amino-acid sequence, 333 residues long: MGIRVAVVGASGYAGGELLRLVAGHPEFELVTATAHSQAGHRLHTVHPQLIGLDLVLAETDPAALADADLVFLALPHGESAALAAQLPPKTRVVDLGADHRLADPYAWANYYGGTHAGQWTYGLSELPGQRERVAAATRVANPGCYATAIILALAPLIAAGAAQPADVVVVAASGVSGAGRAAKAHLLAGEVMGDLSPYRVGAHQHVPEIKQATGATSLSFTPVLAPMPRGILATVTAVPARGVDPQAVLAEAYADAPFVHVLPEGRWPHTAATLGSNSCHLQATVDVDAGRLIVVSGLDNLGRGAAGQAVQNANIMVGLPETTGLSAWGVTP.

Cys-145 is a catalytic residue.

This sequence belongs to the NAGSA dehydrogenase family. Type 1 subfamily.

The protein localises to the cytoplasm. The catalysed reaction is N-acetyl-L-glutamate 5-semialdehyde + phosphate + NADP(+) = N-acetyl-L-glutamyl 5-phosphate + NADPH + H(+). It functions in the pathway amino-acid biosynthesis; L-arginine biosynthesis; N(2)-acetyl-L-ornithine from L-glutamate: step 3/4. In terms of biological role, catalyzes the NADPH-dependent reduction of N-acetyl-5-glutamyl phosphate to yield N-acetyl-L-glutamate 5-semialdehyde. In Salinispora arenicola (strain CNS-205), this protein is N-acetyl-gamma-glutamyl-phosphate reductase.